The sequence spans 1317 residues: WASH complex subunit 2 (1317 aa).

Residues 1–219 (MNRTSPDSER…VGSDRGSIVD (219 aa)) form a sufficient for interaction with WASHC3, WASHC4 and WASHC5; required for interaction with WASHC1 region. Phosphoserine occurs at positions 157, 159, 204, 205, and 209. The span at 201–213 (GELSSEEGSVGSD) shows a compositional bias: low complexity. The segment at 201–630 (GELSSEEGSV…RKSKGELWDS (430 aa)) is disordered. Acidic residues-rich tracts occupy residues 219–232 (DSEE…SDED) and 250–274 (DEEE…EDIE). At Ser284 the chain carries Phosphoserine. Basic and acidic residues-rich tracts occupy residues 289-325 (LAAR…RTPP) and 366-376 (DLFRETSRDRP). At Thr323 the chain carries Phosphothreonine. A sufficient for interaction with CCDC93 region spans residues 348–582 (SRGGLFSGQG…QVSSQQPQSQ (235 aa)). The segment at 349 to 1317 (RGGLFSGQGL…DDPLNAFGSQ (969 aa)) is interaction with VPS35. An LFa 1 motif is present at residues 358 to 368 (LFDDEDESDLF). Positions 379–399 (APVSEESSSPKPGKKIPAGAV) are enriched in low complexity. Phosphoserine is present on residues Ser385 and Ser387. 2 consecutive short sequence motifs (LFa) follow at residues 433 to 445 (LFDD…DNFF) and 464 to 473 (IFDDEEGDLF). A compositionally biased stretch (polar residues) spans 500-518 (TLPSSKNPKLVSETKTQKG). 2 short sequence motifs (LFa) span residues 519-530 (LFSDEEDSEDLF) and 554-565 (LFGDEDEEDNLF). Residues Ser521 and Ser526 each carry the phosphoserine modification. Positions 529–548 (LFSSQNSSKSKSASLLSSQL) are enriched in low complexity. A compositionally biased stretch (low complexity) spans 569-582 (PAKKQVSSQQPQSQ). Residues 583 to 592 (EKPKPSEQPK) are compositionally biased toward basic and acidic residues. The short motif at 599 to 611 (LFSSDEEDQWNIT) is the LFa 6 element. Phosphoserine occurs at positions 601 and 602. A compositionally biased stretch (basic and acidic residues) spans 613–627 (SHTKLATDRKSKGEL). 2 short sequence motifs (LFa) span residues 646 to 657 (LFEEDDDEADLF) and 673 to 685 (LFED…SSLF). The segment at 667-817 (TQRTSLLFED…GRPKSTGVFQ (151 aa)) is disordered. Position 710 is a phosphoserine (Ser710). A compositionally biased stretch (basic and acidic residues) spans 717–744 (VPSRVKSVDVKVGNGKEADVAKVTEKEG). A phosphoserine mark is found at Ser763 and Ser778. Over residues 788–810 (EDQSNTHVSKNDAEKGLKTDGRP) the composition is skewed to basic and acidic residues. 2 short sequence motifs (LFa) span residues 815 to 823 (VFQDEELLF) and 832 to 838 (DPDVDLF). Ser853 bears the Phosphoserine mark. Positions 854–864 (LFGDDEDYDLF) match the LFa 11 motif. 2 disordered regions span residues 867–926 (AKTQ…REPS) and 960–1079 (ELAF…AAPP). The span at 874–906 (PEKKGALKKDRPVSLKNEEAPESTEGSKEKSLW) shows a compositional bias: basic and acidic residues. Residues 912–1317 (QDSSGLTPFK…DDPLNAFGSQ (406 aa)) form an interaction with phospholipids region. A compositionally biased stretch (basic residues) spans 1003 to 1021 (NKSRVKVRGKRRPQTRAAR). The required for interaction with F-actin-capping protein subunit alpha (CAPZA1 or CAPZA2 or CAPZA3) stretch occupies residues 1004 to 1022 (KSRVKVRGKRRPQTRAARR). Ser1029, Ser1047, Ser1064, and Ser1092 each carry phosphoserine. Positions 1107-1114 (LFDSGDIF) match the LFa 12 motif. The interval 1119 to 1141 (GSQSMEGTKVKAAETPAHLSGGS) is disordered. 6 consecutive short sequence motifs (LFa) follow at residues 1147–1161 (VFPA…DDLF), 1177–1185 (LLEDEDDLF), 1210–1216 (IFEDDIF), 1238–1246 (LFDDNIDIF), 1266–1275 (VFDDDTDDIF), and 1306–1314 (IFDDPLNAF). Phosphoserine is present on residues Ser1152, Ser1155, and Ser1156. A disordered region spans residues 1158–1183 (DDLFQTVKPRPAKKRNPFPLLEDEDD). The segment at 1277-1317 (SGLQAKKSKPKSQSAEATSELRSDHKVSNIFDDPLNAFGSQ) is disordered. Position 1316 is a phosphoserine (Ser1316).

Belongs to the FAM21 family. As to quaternary structure, component of the WASH core complex also described as WASH regulatory complex SHRC composed of WASHC1, WASHC2, WASHC3, WASHC4 and WASHC5; in the complex interacts (via N-terminus) directly with WASHC1. The WASH core complex associates via WASHC2 with the F-actin-capping protein dimer (formed by CAPZA1, CAPZA2 or CAPZA3 and CAPZB) in a transient or substoichiometric manner which was initially described as WASH complex. Interacts with VPS35; mediates the association with the retromer CSC complex. Interacts with FKBP15. Interacts with CCDC93, CCDC22, C16orf62 homolog; indicative for an association of the WASH core complex with the CCC complex. Directly interacts with TBC1D23.

The protein resides in the early endosome membrane. It is found in the cell membrane. Acts as a component of the WASH core complex that functions as a nucleation-promoting factor (NPF) at the surface of endosomes, where it recruits and activates the Arp2/3 complex to induce actin polymerization, playing a key role in the fission of tubules that serve as transport intermediates during endosome sorting. Mediates the recruitment of the WASH core complex to endosome membranes via binding to phospholipids and VPS35 of the retromer CSC. Mediates the recruitment of the F-actin-capping protein dimer to the WASH core complex probably promoting localized F-actin polymerization needed for vesicle scission. Via its C-terminus binds various phospholipids, most strongly phosphatidylinositol 4-phosphate (PtdIns-(4)P), phosphatidylinositol 5-phosphate (PtdIns-(5)P) and phosphatidylinositol 3,5-bisphosphate (PtdIns-(3,5)P2). Involved in the endosome-to-plasma membrane trafficking and recycling of SNX27-retromer-dependent cargo proteins, such as GLUT1. Required for the association of DNAJC13, ENTR1, ANKRD50 with retromer CSC subunit VPS35. Required for the endosomal recruitment of CCC complex subunits COMMD1, CCDC93 and C16orf62 homolog. This is WASH complex subunit 2 from Cricetulus griseus (Chinese hamster).